The following is a 281-amino-acid chain: MLSYHHSFHAGNHADVLKHIVLMLILENLKLKEKGFFYLDTHSGVGRYRLSSNESEKTGEYKEGIGRLWDQTDLPEDIARYVKMIKKLNYGGKELRYYAGSPLIAAELLRSQDRALLTELHPSDYPILRNNFSDDKNVTVKCDNGFQQVKATLPPKERRGLVLIDPPYELKDDYDLVVKAIEEGYKRFATGTYAIWYPVVLRQQTKRIFKGLEATGIRKILKIELAVRPDSDQRGMTASGMVVINPPWTLETQMKEILPYLTKTLVPEGTGSWTVEWITPE.

Residues histidine 19, histidine 42, serine 101, glutamate 119, 144–145, and aspartate 165 each bind S-adenosyl-L-methionine; that span reads NG. Aspartate 165 (proton acceptor) is an active-site residue.

This sequence belongs to the RlmJ family. As to quaternary structure, monomer.

It carries out the reaction adenosine(2030) in 23S rRNA + S-adenosyl-L-methionine = N(6)-methyladenosine(2030) in 23S rRNA + S-adenosyl-L-homocysteine + H(+). In terms of biological role, specifically methylates the adenine in position 2030 of 23S rRNA. The protein is Ribosomal RNA large subunit methyltransferase J of Haemophilus influenzae (strain ATCC 51907 / DSM 11121 / KW20 / Rd).